The chain runs to 958 residues: Translation initiation factor IF-2 (958 aa).

A compositionally biased stretch (low complexity) spans 50–67 (FKPAAAPKVEAKPAAPKV). Disordered stretches follow at residues 50–224 (FKPA…RIDF) and 288–374 (EVVP…HELP). 3 stretches are compositionally biased toward basic and acidic residues: residues 68–89 (SAEK…EEAK), 96–118 (SAEK…EAKP), and 138–153 (FKAE…AERR). The segment covering 157-169 (KGNNRDQQQNGNR) has biased composition (low complexity). Composition is skewed to basic and acidic residues over residues 185–195 (RDNRRFNDQAK) and 290–323 (VPEK…DGPR). Residues 337–346 (NQKNSNWNNN) are compositionally biased toward low complexity. Over residues 365–374 (VTERKFHELP) the composition is skewed to basic and acidic residues. The tr-type G domain maps to 460–627 (ERPPVVTIMG…TVLLVAEIQE (168 aa)). Positions 469 to 476 (GHVDHGKT) are G1. Residue 469-476 (GHVDHGKT) coordinates GTP. Positions 494 to 498 (GITQH) are G2. Residues 515–518 (DTPG) are G3. GTP is bound by residues 515-519 (DTPGH) and 569-572 (NKID). The segment at 569–572 (NKID) is G4. A G5 region spans residues 605–607 (SAK).

Belongs to the TRAFAC class translation factor GTPase superfamily. Classic translation factor GTPase family. IF-2 subfamily.

Its subcellular location is the cytoplasm. In terms of biological role, one of the essential components for the initiation of protein synthesis. Protects formylmethionyl-tRNA from spontaneous hydrolysis and promotes its binding to the 30S ribosomal subunits. Also involved in the hydrolysis of GTP during the formation of the 70S ribosomal complex. The chain is Translation initiation factor IF-2 from Streptococcus pneumoniae serotype 4 (strain ATCC BAA-334 / TIGR4).